The chain runs to 98 residues: NADH-ubiquinone oxidoreductase chain 4L (98 aa).

The next 3 membrane-spanning stretches (helical) occupy residues 2–22 (PSISINITLAFTMALTGMLVF), 29–49 (SLLCLEGMMLSMFILSILFIM), and 61–81 (ILLLVLAACEAAIGLALLVMV).

This sequence belongs to the complex I subunit 4L family. As to quaternary structure, core subunit of respiratory chain NADH dehydrogenase (Complex I) which is composed of 45 different subunits.

The protein resides in the mitochondrion inner membrane. The enzyme catalyses a ubiquinone + NADH + 5 H(+)(in) = a ubiquinol + NAD(+) + 4 H(+)(out). Its function is as follows. Core subunit of the mitochondrial membrane respiratory chain NADH dehydrogenase (Complex I) which catalyzes electron transfer from NADH through the respiratory chain, using ubiquinone as an electron acceptor. Part of the enzyme membrane arm which is embedded in the lipid bilayer and involved in proton translocation. The polypeptide is NADH-ubiquinone oxidoreductase chain 4L (MT-ND4L) (Lepilemur mitsinjoensis (Mitsinjo sportive lemur)).